We begin with the raw amino-acid sequence, 37 residues long: Large ribosomal subunit protein bL36 (37 aa).

It belongs to the bacterial ribosomal protein bL36 family.

In Mycobacterium ulcerans (strain Agy99), this protein is Large ribosomal subunit protein bL36.